We begin with the raw amino-acid sequence, 298 residues long: MKVLWAALVVTLLAGCRADVEPEVEVREPAVWQSGQPWELALSRFWDYLRWVQTLSDQVQEELLSNQVTQELTLLIEDTMKEVKDYKAELEKELGPVAEDTKARLAKELQAAQARLGADMEEVRNRLSQYRSEVQAMLGQSSEELRARLTSHLRKMRKRLQRDIDELQKRMAVYKAGAQEGAERGVSAIRERLGSLIEQGRLQALTSQPLQERAQAWGEQMRGRLEKVGSQARDRLEEVREQMEEVRVKVEEQAEAFQARLKSWFEPMMEDMRRQWAELIQKVQVAVGASTSAPSQEP.

Positions 1–18 (MKVLWAALVVTLLAGCRA) are cleaved as a signal peptide. Repeat copies occupy residues 74–94 (LLIEDTMKEVKDYKAELEKEL), 95–116 (GPVAEDTKARLAKELQAAQARL), 117–138 (GADMEEVRNRLSQYRSEVQAML), 139–160 (GQSSEELRARLTSHLRKMRKRL), 161–182 (QRDIDELQKRMAVYKAGAQEGA), 183–203 (ERGVSAIRERLGSLIEQGRLQ), 204–221 (ALTSQPLQERAQAWGEQM), and 222–243 (RGRLEKVGSQARDRLEEVREQM). The interval 95 to 243 (GPVAEDTKAR…DRLEEVREQM (149 aa)) is 8 X 22 AA approximate tandem repeats. The residue at position 137 (Met-137) is a Methionine sulfoxide. At Ser-141 the chain carries Phosphoserine. Residues 151-161 (SHLRKMRKRLQ) form an LDL and other lipoprotein receptors binding region. 155-158 (KMRK) is a heparin binding site. The interval 203–271 (QALTSQPLQE…KSWFEPMMED (69 aa)) is lipid-binding and lipoprotein association. 217-224 (WGEQMRGR) provides a ligand contact to heparin. A specificity for association with VLDL region spans residues 259–271 (ARLKSWFEPMMED).

The protein belongs to the apolipoprotein A1/A4/E family. Homotetramer. May interact with ABCA1; functionally associated with ABCA1 in the biogenesis of HDLs. May interact with APP/A4 amyloid-beta peptide; the interaction is extremely stable in vitro but its physiological significance is unclear. May interact with MAPT. May interact with MAP2. In the cerebrospinal fluid, interacts with secreted SORL1. Interacts with PMEL; this allows the loading of PMEL luminal fragment on ILVs to induce fibril nucleation. In terms of processing, APOE exists as multiple glycosylated and sialylated glycoforms within cells and in plasma. The extent of glycosylation and sialylation are tissue and context specific. Glycated in plasma VLDL. Post-translationally, phosphorylated by FAM20C in the extracellular medium.

The protein resides in the secreted. It localises to the extracellular space. The protein localises to the extracellular matrix. Its subcellular location is the extracellular vesicle. It is found in the endosome. The protein resides in the multivesicular body. In terms of biological role, APOE is an apolipoprotein, a protein associating with lipid particles, that mainly functions in lipoprotein-mediated lipid transport between organs via the plasma and interstitial fluids. APOE is a core component of plasma lipoproteins and is involved in their production, conversion and clearance. Apolipoproteins are amphipathic molecules that interact both with lipids of the lipoprotein particle core and the aqueous environment of the plasma. As such, APOE associates with chylomicrons, chylomicron remnants, very low density lipoproteins (VLDL) and intermediate density lipoproteins (IDL) but shows a preferential binding to high-density lipoproteins (HDL). It also binds a wide range of cellular receptors including the LDL receptor/LDLR, the LDL receptor-related proteins LRP1, LRP2 and LRP8 and the very low-density lipoprotein receptor/VLDLR that mediate the cellular uptake of the APOE-containing lipoprotein particles. Finally, APOE also has a heparin-binding activity and binds heparan-sulfate proteoglycans on the surface of cells, a property that supports the capture and the receptor-mediated uptake of APOE-containing lipoproteins by cells. A main function of APOE is to mediate lipoprotein clearance through the uptake of chylomicrons, VLDLs, and HDLs by hepatocytes. APOE is also involved in the biosynthesis by the liver of VLDLs as well as their uptake by peripheral tissues ensuring the delivery of triglycerides and energy storage in muscle, heart and adipose tissues. By participating in the lipoprotein-mediated distribution of lipids among tissues, APOE plays a critical role in plasma and tissues lipid homeostasis. APOE is also involved in two steps of reverse cholesterol transport, the HDLs-mediated transport of cholesterol from peripheral tissues to the liver, and thereby plays an important role in cholesterol homeostasis. First, it is functionally associated with ABCA1 in the biogenesis of HDLs in tissues. Second, it is enriched in circulating HDLs and mediates their uptake by hepatocytes. APOE also plays an important role in lipid transport in the central nervous system, regulating neuron survival and sprouting. This chain is Apolipoprotein E (APOE), found in Cavia tschudii (Montane guinea pig).